The following is a 227-amino-acid chain: MTAAAPVITIDGPSGAGKGTLCKAMAEALQWHLLDSGAIYRVLALAALHHHVDVASEEALVPLAAHLDVRFISTHGNLEVILEGEDVSGEIRTQEVANAASQVAAFPRVREALLRRQRAFREAPGLIADGRDMGTVVFPDAPVKIFLDASSEERAQRRMLQLQEKGFSVNFDRLLSEIKERDDRDRNRAVAPLVPAEDALVLDSTSLTIEQVIEKALQYARQKLALA.

12–20 (GPSGAGKGT) contributes to the ATP binding site.

This sequence belongs to the cytidylate kinase family. Type 1 subfamily.

It localises to the cytoplasm. It catalyses the reaction CMP + ATP = CDP + ADP. The catalysed reaction is dCMP + ATP = dCDP + ADP. In Enterobacter sp. (strain 638), this protein is Cytidylate kinase.